A 286-amino-acid chain; its full sequence is Ribosomal RNA small subunit methyltransferase H (286 aa).

S-adenosyl-L-methionine-binding positions include 30-32 (GGH), aspartate 49, phenylalanine 88, aspartate 97, and glutamine 104. The interval 260-286 (HPLQPSDEESFNNPASRSAKLRALEMR) is disordered.

Belongs to the methyltransferase superfamily. RsmH family.

It is found in the cytoplasm. It carries out the reaction cytidine(1402) in 16S rRNA + S-adenosyl-L-methionine = N(4)-methylcytidine(1402) in 16S rRNA + S-adenosyl-L-homocysteine + H(+). Specifically methylates the N4 position of cytidine in position 1402 (C1402) of 16S rRNA. The polypeptide is Ribosomal RNA small subunit methyltransferase H (Solibacter usitatus (strain Ellin6076)).